Here is a 485-residue protein sequence, read N- to C-terminus: N-succinylglutamate 5-semialdehyde dehydrogenase (485 aa).

Position 220–225 (Gly220–Gly225) interacts with NAD(+). Active-site residues include Glu243 and Cys278.

Belongs to the aldehyde dehydrogenase family. AstD subfamily.

The catalysed reaction is N-succinyl-L-glutamate 5-semialdehyde + NAD(+) + H2O = N-succinyl-L-glutamate + NADH + 2 H(+). Its pathway is amino-acid degradation; L-arginine degradation via AST pathway; L-glutamate and succinate from L-arginine: step 4/5. Its function is as follows. Catalyzes the NAD-dependent reduction of succinylglutamate semialdehyde into succinylglutamate. This is N-succinylglutamate 5-semialdehyde dehydrogenase from Aliivibrio fischeri (strain ATCC 700601 / ES114) (Vibrio fischeri).